Consider the following 436-residue polypeptide: UPF0597 protein YhaM (436 aa).

The protein belongs to the UPF0597 family.

In Escherichia coli O127:H6 (strain E2348/69 / EPEC), this protein is UPF0597 protein YhaM.